The sequence spans 505 residues: Cytochrome P450 71A2 (505 aa).

Residues W7–F27 traverse the membrane as a helical segment. Residue C448 participates in heme binding.

The protein belongs to the cytochrome P450 family. Heme serves as cofactor.

It localises to the membrane. Functionally, may have a role in maturation, such as during flavor formation or other metabolite production specific to aging tissues. This chain is Cytochrome P450 71A2 (CYP71A2), found in Solanum melongena (Eggplant).